Consider the following 147-residue polypeptide: Nitric oxide reductase subunit C (147 aa).

A helical; Signal-anchor transmembrane segment spans residues 13 to 29; sequence VFYGGSLFFIAVFVGLT. Cysteine 59, cysteine 62, and histidine 63 together coordinate heme c.

Heterodimer of cytochromes b (large subunit) and c (small subunit).

It localises to the cell membrane. Component of the anaerobic respiratory chain that transforms nitrate to dinitrogen (denitrification). The polypeptide is Nitric oxide reductase subunit C (norC) (Cereibacter sphaeroides (strain ATCC 17025 / ATH 2.4.3) (Rhodobacter sphaeroides)).